The chain runs to 361 residues: Probable dual-specificity RNA methyltransferase RlmN (361 aa).

Catalysis depends on E91, which acts as the Proton acceptor. The 233-residue stretch at 97–329 (QHYGLSVCVT…KKKGVNCVVR (233 aa)) folds into the Radical SAM core domain. The cysteines at positions 104 and 340 are disulfide-linked. The [4Fe-4S] cluster site is built by C111, C115, and C118. S-adenosyl-L-methionine is bound by residues 163–164 (GE), S195, 218–220 (SLH), and N296. Catalysis depends on C340, which acts as the S-methylcysteine intermediate.

It belongs to the radical SAM superfamily. RlmN family. [4Fe-4S] cluster is required as a cofactor.

It localises to the cytoplasm. It carries out the reaction adenosine(2503) in 23S rRNA + 2 reduced [2Fe-2S]-[ferredoxin] + 2 S-adenosyl-L-methionine = 2-methyladenosine(2503) in 23S rRNA + 5'-deoxyadenosine + L-methionine + 2 oxidized [2Fe-2S]-[ferredoxin] + S-adenosyl-L-homocysteine. The catalysed reaction is adenosine(37) in tRNA + 2 reduced [2Fe-2S]-[ferredoxin] + 2 S-adenosyl-L-methionine = 2-methyladenosine(37) in tRNA + 5'-deoxyadenosine + L-methionine + 2 oxidized [2Fe-2S]-[ferredoxin] + S-adenosyl-L-homocysteine. Specifically methylates position 2 of adenine 2503 in 23S rRNA and position 2 of adenine 37 in tRNAs. The chain is Probable dual-specificity RNA methyltransferase RlmN from Streptococcus pneumoniae serotype 4 (strain ATCC BAA-334 / TIGR4).